The chain runs to 364 residues: DNA replication and repair protein RecF (364 aa).

30–37 (GNNAQGKT) is a binding site for ATP.

It belongs to the RecF family.

The protein resides in the cytoplasm. In terms of biological role, the RecF protein is involved in DNA metabolism; it is required for DNA replication and normal SOS inducibility. RecF binds preferentially to single-stranded, linear DNA. It also seems to bind ATP. This Clostridium botulinum (strain 657 / Type Ba4) protein is DNA replication and repair protein RecF.